Reading from the N-terminus, the 230-residue chain is Androgen-dependent TFPI-regulating protein (230 aa).

At 1–7 (MTKTTTC) the chain is on the cytoplasmic side. The helical transmembrane segment at 8–28 (VYHFLVLNWYIFLNYHIPQIG) threads the bilayer. Residues 29–45 (RNEEKLREFHDGGRSKY) lie on the Extracellular side of the membrane. A helical transmembrane segment spans residues 46–66 (LTLLNLLLQAIFFGVACLDDV). Topologically, residues 67–85 (LKRVIGRKDIKFVTSFRDL) are cytoplasmic. The helical transmembrane segment at 86–106 (LFTTMAFPISTFVFLVFWTLF) threads the bilayer. The Extracellular portion of the chain corresponds to 107 to 120 (HYDRSLVYPKGLDD). A helical transmembrane segment spans residues 121–141 (FFPAWVNHAMHTSIFPFSLFE). The Cytoplasmic segment spans residues 142 to 154 (TILRPHNYPSKKL). A helical membrane pass occupies residues 155 to 175 (GLTLLGAFNFAYIIRILWRYV). Residues 176-190 (QTGNWVYPVFDSLSP) are Extracellular-facing. A helical transmembrane segment spans residues 191–211 (LGIIIFFSAAYILVAGIYLFG). The Cytoplasmic portion of the chain corresponds to 212–230 (EKINHWKWGAIAKPQMKKN).

It belongs to the AIG1 family.

It is found in the cell membrane. It catalyses the reaction 9-hexadecanoyloxy-octadecanoate + H2O = 9-hydroxy-octadecanoate + hexadecanoate + H(+). The catalysed reaction is 12-hexadecanoyloxy-octadecanoate + H2O = 12-hydroxyoctadecanoate + hexadecanoate + H(+). The enzyme catalyses 9-(9Z-hexadecenoyloxy)-octadecanoate + H2O = (9Z)-hexadecenoate + 9-hydroxy-octadecanoate + H(+). It carries out the reaction 12-(9Z-hexadecenoyloxy)-octadecanoate + H2O = 12-hydroxyoctadecanoate + (9Z)-hexadecenoate + H(+). It catalyses the reaction 13-(9Z-hexadecenoyloxy)-octadecanoate + H2O = 13-hydroxy-octadecanoate + (9Z)-hexadecenoate + H(+). The catalysed reaction is 9-octadecanoyloxy-octadecanoate + H2O = 9-hydroxy-octadecanoate + octadecanoate + H(+). The enzyme catalyses 12-octadecanoyloxy-octadecanoate + H2O = 12-hydroxyoctadecanoate + octadecanoate + H(+). It carries out the reaction 13-octadecanoyloxy-octadecanoate + H2O = 13-hydroxy-octadecanoate + octadecanoate + H(+). It catalyses the reaction 9-(9Z-octadecenoyloxy)-octadecanoate + H2O = 9-hydroxy-octadecanoate + (9Z)-octadecenoate + H(+). The catalysed reaction is 12-(9Z-octadecenoyloxy)-octadecanoate + H2O = 12-hydroxyoctadecanoate + (9Z)-octadecenoate + H(+). The enzyme catalyses 13-(9Z-octadecenoyloxy)-octadecanoate + H2O = 13-hydroxy-octadecanoate + (9Z)-octadecenoate + H(+). It carries out the reaction 5-(9Z-octadecenoyloxy)-octadecanoate + H2O = 5-hydroxy-octadecanoate + (9Z)-octadecenoate + H(+). In terms of biological role, hydrolyzes bioactive fatty-acid esters of hydroxy-fatty acids (FAHFAs), but not other major classes of lipids. Shows a preference for FAHFAs with branching distal from the carboxylate head group of the lipids. Regulates the expression and the cell-associated anticoagulant activity of the inhibitor TFPI in endothelial cells (in vitro). In Mus musculus (Mouse), this protein is Androgen-dependent TFPI-regulating protein (Adtrp).